The following is a 463-amino-acid chain: 23S rRNA (uracil(1939)-C(5))-methyltransferase RlmD (463 aa).

The TRAM domain maps to 6 to 76 (KSRKPQQPEY…KRLEEAEMVA (71 aa)). [4Fe-4S] cluster contacts are provided by Cys-90, Cys-96, Cys-99, and Cys-178. Gln-288, Phe-317, Asn-322, Glu-341, Asp-368, and Asp-389 together coordinate S-adenosyl-L-methionine. Cys-415 acts as the Nucleophile in catalysis.

It belongs to the class I-like SAM-binding methyltransferase superfamily. RNA M5U methyltransferase family. RlmD subfamily.

It carries out the reaction uridine(1939) in 23S rRNA + S-adenosyl-L-methionine = 5-methyluridine(1939) in 23S rRNA + S-adenosyl-L-homocysteine + H(+). Its function is as follows. Catalyzes the formation of 5-methyl-uridine at position 1939 (m5U1939) in 23S rRNA. This is 23S rRNA (uracil(1939)-C(5))-methyltransferase RlmD from Acinetobacter baumannii (strain ACICU).